Reading from the N-terminus, the 188-residue chain is Adenine phosphoribosyltransferase (188 aa).

It belongs to the purine/pyrimidine phosphoribosyltransferase family. In terms of assembly, homodimer.

It localises to the cytoplasm. It carries out the reaction AMP + diphosphate = 5-phospho-alpha-D-ribose 1-diphosphate + adenine. The protein operates within purine metabolism; AMP biosynthesis via salvage pathway; AMP from adenine: step 1/1. In terms of biological role, catalyzes a salvage reaction resulting in the formation of AMP, that is energically less costly than de novo synthesis. The protein is Adenine phosphoribosyltransferase of Neisseria meningitidis serogroup C (strain 053442).